Reading from the N-terminus, the 390-residue chain is Two-component response regulator ORR29 (390 aa).

Residues 13–130 (SAMVIDEDKC…TIKNLWQYVD (118 aa)) enclose the Response regulatory domain. A 4-aspartylphosphate modification is found at Asp65. A DNA-binding region (myb-like GARP) is located at residues 169 to 226 (KKYYLMWTPHLQKKFLHALQILGKDASPKNIKKIMGVDNIDCRQIAAHLQKHRLRLTK). 2 disordered regions span residues 233 to 271 (FTTD…QPTE) and 303 to 339 (SKHS…SGDH). The segment covering 257 to 271 (NASTLQPRSNTQPTE) has biased composition (polar residues).

This sequence belongs to the ARR family. Type-B subfamily. Two-component system major event consists of a His-to-Asp phosphorelay between a sensor histidine kinase (HK) and a response regulator (RR). In plants, the His-to-Asp phosphorelay involves an additional intermediate named Histidine-containing phosphotransfer protein (HPt). This multistep phosphorelay consists of a His-Asp-His-Asp sequential transfer of a phosphate group between first a His and an Asp of the HK protein, followed by the transfer to a conserved His of the HPt protein and finally the transfer to an Asp in the receiver domain of the RR protein.

The protein resides in the nucleus. Its function is as follows. Transcriptional activator that binds specific DNA sequence. Functions as a response regulator involved in His-to-Asp phosphorelay signal transduction system. Phosphorylation of the Asp residue in the receiver domain activates the ability of the protein to promote the transcription of target genes. May directly activate some type-A response regulators in response to cytokinins. The protein is Two-component response regulator ORR29 of Oryza sativa subsp. indica (Rice).